The chain runs to 182 residues: Pyruvoyl-dependent arginine decarboxylase (182 aa).

Residue Ser44 is modified to Pyruvic acid (Ser).

The protein belongs to the PdaD family. It depends on pyruvate as a cofactor.

The catalysed reaction is L-arginine + H(+) = agmatine + CO2. The chain is Pyruvoyl-dependent arginine decarboxylase from Picrophilus torridus (strain ATCC 700027 / DSM 9790 / JCM 10055 / NBRC 100828 / KAW 2/3).